A 67-amino-acid polypeptide reads, in one-letter code: MAIFRIDEIRNMSSEELEEELRKLEVELIRERGAVRAGGAPEKPGRIREIRRTIARMKTVQRERVRK.

The protein belongs to the universal ribosomal protein uL29 family.

In Methanothrix thermoacetophila (strain DSM 6194 / JCM 14653 / NBRC 101360 / PT) (Methanosaeta thermophila), this protein is Large ribosomal subunit protein uL29.